The following is a 257-amino-acid chain: Pyrroline-5-carboxylate reductase (257 aa).

Belongs to the pyrroline-5-carboxylate reductase family.

The protein resides in the cytoplasm. The enzyme catalyses L-proline + NADP(+) = (S)-1-pyrroline-5-carboxylate + NADPH + 2 H(+). It carries out the reaction L-proline + NAD(+) = (S)-1-pyrroline-5-carboxylate + NADH + 2 H(+). Its pathway is amino-acid biosynthesis; L-proline biosynthesis; L-proline from L-glutamate 5-semialdehyde: step 1/1. Functionally, catalyzes the reduction of 1-pyrroline-5-carboxylate (PCA) to L-proline. This is Pyrroline-5-carboxylate reductase from Helicobacter pylori (strain J99 / ATCC 700824) (Campylobacter pylori J99).